Here is a 369-residue protein sequence, read N- to C-terminus: Phosphate acyltransferase (369 aa).

This sequence belongs to the PlsX family. In terms of assembly, homodimer. Probably interacts with PlsY.

The protein localises to the cytoplasm. It catalyses the reaction a fatty acyl-[ACP] + phosphate = an acyl phosphate + holo-[ACP]. It participates in lipid metabolism; phospholipid metabolism. Functionally, catalyzes the reversible formation of acyl-phosphate (acyl-PO(4)) from acyl-[acyl-carrier-protein] (acyl-ACP). This enzyme utilizes acyl-ACP as fatty acyl donor, but not acyl-CoA. In Gluconobacter oxydans (strain 621H) (Gluconobacter suboxydans), this protein is Phosphate acyltransferase.